We begin with the raw amino-acid sequence, 248 residues long: Mannose-binding protein C (248 aa).

The N-terminal stretch at 1–20 (MSLFPSLPLLLLSVVAASYS) is a signal peptide. Residues 42-99 (GINGFPGKDGRDGTKGEKGEPGQGLRGLQGPPGKLGPPGNPGPSGSPGPKGQKGDPGK) form the Collagen-like domain. The interval 43–111 (INGFPGKDGR…DCDSSLAASE (69 aa)) is disordered. 4-hydroxyproline is present on proline 47. Positions 49 to 61 (KDGRDGTKGEKGE) are enriched in basic and acidic residues. 4-hydroxyproline occurs at positions 73, 79, 82, and 88. Pro residues predominate over residues 75–87 (KLGPPGNPGPSGS). Residues 93-102 (QKGDPGKSPD) show a composition bias toward basic and acidic residues. Residues 112-130 (RKALQTEMARIKKWLTFSL) are a coiled coil. The 112-residue stretch at 134–245 (VGNKFFLTNG…CSSSHLAVCE (112 aa)) folds into the C-type lectin domain. Cystine bridges form between cysteine 155–cysteine 244 and cysteine 222–cysteine 236.

Oligomeric complex of 3 or more homotrimers. Interacts with MASP1 and MASP2. Interacts with MEP1A and MEP1B and may inhibit their catalytic activity. Post-translationally, hydroxylation on proline residues within the sequence motif, GXPG, is most likely to be 4-hydroxy as this fits the requirement for 4-hydroxylation in vertebrates.

The protein localises to the secreted. Its function is as follows. Calcium-dependent lectin involved in innate immune defense. Binds mannose, fucose and N-acetylglucosamine on different microorganisms and activates the lectin complement pathway. Binds to late apoptotic cells, as well as to apoptotic blebs and to necrotic cells, but not to early apoptotic cells, facilitating their uptake by macrophages. The chain is Mannose-binding protein C (MBL2) from Pongo pygmaeus (Bornean orangutan).